The following is an 803-amino-acid chain: Rho guanine nucleotide exchange factor 7 (803 aa).

Methionine 1 carries the N-acetylmethionine modification. The region spanning 1 to 133 is the Calponin-homology (CH) domain; it reads MNSAEQTVTW…SLVTLNKVTA (133 aa). Asparagine 2 is subject to N-acetylthreonine. Serine 153 and serine 176 each carry phosphoserine. In terms of domain architecture, SH3 spans 184 to 243; it reads NNQLVVRAKFNFQQTNEDELSFSKGDVIHVTRVEEGGWWEGTLNGRTGWFPSNYVREVKA. Phosphoserine occurs at positions 249 and 257. In terms of domain architecture, DH spans 271 to 451; it reads YYNVVLQNIL…KNLSAQCQEV (181 aa). A PH domain is found at 473-578; the sequence is DIKTLGNVTY…WVEHLQKQTK (106 aa). Serine 518, cysteine 560, and valine 579 each carry phosphoserine. Residues 580 to 655 are disordered; the sequence is TSVGNPTIKP…TPKPWSLSCL (76 aa). Residues 593–606 show a composition bias toward polar residues; it reads PSHTLPSHPVTPSS. Lysine 645 and serine 664 each carry phosphoserine. Positions 678–690 are enriched in basic residues; the sequence is KTMKKLLPKRKPE. Disordered stretches follow at residues 678 to 704 and 748 to 773; these read KTMK…RKST and DDQP…LSED. Residues 691-700 show a composition bias toward basic and acidic residues; sequence RKPSDEEFAS. Phosphoserine; by CaMK1 is present on serine 694. Low complexity predominate over residues 752 to 765; sequence SLDSLGRRSSLSRL.

Interacts with PAK kinases through the SH3 domain. Interacts with GIT1 and TGFB1I1. Interacts with PTK2/FAK1 and RAC1. Interacts with ITCH and PARVB. Interacts with unphosphorylated PAK1. Interacts with SCRIB; interaction is direct and may play a role in regulation of apoptosis. Interacts with FRMPD4 (via N-terminus). Interacts with CaMK1. Interacts with BIN2. Interacts with YWHAZ. Interacts (via PH domain) with NOX1 (via FAD-binding FR-type domain). In terms of assembly, interacts with SNX27. Post-translationally, phosphorylated by PTK2/FAK1; this promotes interaction with RAC1. Phosphorylated on Ser-694 by CaMK1; enhancement of GEF activity and downstream activation of RAC1.

The protein resides in the cell junction. Its subcellular location is the focal adhesion. The protein localises to the cell projection. It is found in the ruffle. It localises to the cytoplasm. The protein resides in the cell cortex. Its subcellular location is the lamellipodium. Functionally, acts as a RAC1 guanine nucleotide exchange factor (GEF) and can induce membrane ruffling. Functions in cell migration, attachment and cell spreading. Promotes targeting of RAC1 to focal adhesions. May function as a positive regulator of apoptosis. Downstream of NMDA receptors and CaMKK-CaMK1 signaling cascade, promotes the formation of spines and synapses in hippocampal neurons. This Homo sapiens (Human) protein is Rho guanine nucleotide exchange factor 7 (ARHGEF7).